The chain runs to 137 residues: 6,7-dimethyl-8-ribityllumazine synthase (137 aa).

5-amino-6-(D-ribitylamino)uracil contacts are provided by residues Phe-11, 43 to 45 (SFD), and 67 to 69 (CVI). Residue 72 to 73 (DT) coordinates (2S)-2-hydroxy-3-oxobutyl phosphate. His-75 acts as the Proton donor in catalysis. Leu-100 is a 5-amino-6-(D-ribitylamino)uracil binding site. Residue Arg-115 coordinates (2S)-2-hydroxy-3-oxobutyl phosphate.

It belongs to the DMRL synthase family. In terms of assembly, forms an icosahedral capsid composed of 60 subunits, arranged as a dodecamer of pentamers.

The enzyme catalyses (2S)-2-hydroxy-3-oxobutyl phosphate + 5-amino-6-(D-ribitylamino)uracil = 6,7-dimethyl-8-(1-D-ribityl)lumazine + phosphate + 2 H2O + H(+). The protein operates within cofactor biosynthesis; riboflavin biosynthesis; riboflavin from 2-hydroxy-3-oxobutyl phosphate and 5-amino-6-(D-ribitylamino)uracil: step 1/2. In terms of biological role, catalyzes the formation of 6,7-dimethyl-8-ribityllumazine by condensation of 5-amino-6-(D-ribitylamino)uracil with 3,4-dihydroxy-2-butanone 4-phosphate. This is the penultimate step in the biosynthesis of riboflavin. This Methanococcus maripaludis (strain DSM 14266 / JCM 13030 / NBRC 101832 / S2 / LL) protein is 6,7-dimethyl-8-ribityllumazine synthase.